The chain runs to 396 residues: Elongation factor Tu (396 aa).

One can recognise a tr-type G domain in the interval 10–206 (KPHVNVGTIG…ALDTYIPTPE (197 aa)). The G1 stretch occupies residues 19 to 26 (GHVDHGKT). GTP is bound at residue 19–26 (GHVDHGKT). T26 provides a ligand contact to Mg(2+). The tract at residues 60 to 64 (GITIN) is G2. Positions 81 to 84 (DCPG) are G3. Residues 81–85 (DCPGH) and 136–139 (NKCD) contribute to the GTP site. A G4 region spans residues 136-139 (NKCD). The segment at 174-176 (SAK) is G5.

The protein belongs to the TRAFAC class translation factor GTPase superfamily. Classic translation factor GTPase family. EF-Tu/EF-1A subfamily. As to quaternary structure, monomer.

The protein resides in the cytoplasm. The catalysed reaction is GTP + H2O = GDP + phosphate + H(+). Functionally, GTP hydrolase that promotes the GTP-dependent binding of aminoacyl-tRNA to the A-site of ribosomes during protein biosynthesis. The protein is Elongation factor Tu of Burkholderia vietnamiensis (strain G4 / LMG 22486) (Burkholderia cepacia (strain R1808)).